Reading from the N-terminus, the 433-residue chain is Serine hydroxymethyltransferase (433 aa).

(6S)-5,6,7,8-tetrahydrofolate is bound by residues leucine 132 and 136–138 (GHL). Lysine 241 carries the post-translational modification N6-(pyridoxal phosphate)lysine.

Belongs to the SHMT family. In terms of assembly, homodimer. Requires pyridoxal 5'-phosphate as cofactor.

The protein localises to the cytoplasm. The enzyme catalyses (6R)-5,10-methylene-5,6,7,8-tetrahydrofolate + glycine + H2O = (6S)-5,6,7,8-tetrahydrofolate + L-serine. Its pathway is one-carbon metabolism; tetrahydrofolate interconversion. The protein operates within amino-acid biosynthesis; glycine biosynthesis; glycine from L-serine: step 1/1. Catalyzes the reversible interconversion of serine and glycine with tetrahydrofolate (THF) serving as the one-carbon carrier. This reaction serves as the major source of one-carbon groups required for the biosynthesis of purines, thymidylate, methionine, and other important biomolecules. Also exhibits THF-independent aldolase activity toward beta-hydroxyamino acids, producing glycine and aldehydes, via a retro-aldol mechanism. The sequence is that of Serine hydroxymethyltransferase from Rhodopseudomonas palustris (strain BisA53).